The primary structure comprises 116 residues: Large ribosomal subunit protein bL17 (116 aa).

The protein belongs to the bacterial ribosomal protein bL17 family. As to quaternary structure, part of the 50S ribosomal subunit. Contacts protein L32.

This Prochlorococcus marinus (strain MIT 9303) protein is Large ribosomal subunit protein bL17.